We begin with the raw amino-acid sequence, 425 residues long: Inhibin beta A chain (425 aa).

Positions 1–20 are cleaved as a signal peptide; the sequence is MPLLWLRGFLLASCWIIVRS. The propeptide occupies 21-309; it reads SPTPGSEGHS…EDHPHRRRRR (289 aa). N-linked (GlcNAc...) asparagine glycosylation is present at asparagine 165. The tract at residues 259–289 is disordered; sequence KKKKKEEEGEGKKRDGEGGAGGDEEKEQSHR. Basic and acidic residues predominate over residues 263 to 275; that stretch reads KEEEGEGKKRDGE. 4 disulfide bridges follow: cysteine 313–cysteine 321, cysteine 320–cysteine 390, cysteine 349–cysteine 422, and cysteine 353–cysteine 424.

Belongs to the TGF-beta family. Dimeric, linked by one or more disulfide bonds. Inhibin A is a dimer of alpha/INHA and beta-A/INHBA. Activin A is a homodimer of beta-A/INHBA. Activin AB is a dimer of beta-A/INHBA and beta-B/INHBB. Interacts with FST and FSTL3; these interactions prevent activin A interaction to its type II receptor. Activin A interacts with ACVR2A. Activin A interacts with BMPR2. Inhibin A interacts with ACVR1; this interaction creates a non-signaling complex (NSC) that inhibits ACVR1-mediated BMP signaling. Inhibin A interacts with ACVR2A.

Its subcellular location is the secreted. In terms of biological role, inhibins/activins are involved in regulating a number of diverse functions such as hypothalamic and pituitary hormone secretion, gonadal hormone secretion, germ cell development and maturation, erythroid differentiation, insulin secretion, nerve cell survival, embryonic axial development or bone growth, depending on their subunit composition. Activin A is a homodimer of INHBA that plays a role in several essential biological processes including embryonic development, stem cell maintenance and differentiation, haematopoiesis, cell proliferation and tissue fibrosis. Signals through type I (such as ACVR1B or ACVR1C) and type II receptors (such as ACVR2A, ACVR2B or BMPR2) which, upon ligand binding, phosphorylate SMAD2 and SMAD3 intracellular signaling mediators that form a complex with SMAD4, translocate to the nucleus and modulate gene expression. Can also activate alternative non-canonical intracellular signaling pathways including the p38 MAPK, extracellular signal-regulated kinases 1/2 (ERK1/2) and c-Jun N-terminal kinases (JNKs) to modulate cell migration and differentiation. Alternatively, promotes osteoblastic differentiation via ACVRL1-SMAD1/5/9 pathway. In addition, can engage the type I receptor ACVR1 to form an ACVR1-activin A-type II receptor non-signaling complex (NSC) that renders receptors unavailable for engagement with BMPs, hence resulting in an apparent inhibition of ACVR1-mediated BMP signaling. Functionally, inhibin A is a dimer of alpha/INHA and beta-A/INHBA that functions as a feedback regulator in the hypothalamic-pituitary-gonadal (HPG) axis. Inhibits the secretion of FSH from the anterior pituitary gland by acting on pituitary gonadotrope cells. Antagonizes activin A by binding to the proteoglycan, betaglycan, and forming a stable complex with and, thereby, sequestering type II activin receptors while excluding type I receptor. This Bos taurus (Bovine) protein is Inhibin beta A chain (INHBA).